The sequence spans 244 residues: High frequency lysogenization protein HflD homolog (244 aa).

The protein belongs to the HflD family.

It localises to the cytoplasm. Its subcellular location is the cell inner membrane. The sequence is that of High frequency lysogenization protein HflD homolog from Acinetobacter baumannii (strain SDF).